The primary structure comprises 193 residues: MRANNNNTREEERSSSSKQQQPQAHMSLKIIDSCLRLSVVPLSVATIWLTVTNHESNPDYGNLDYNSIMGLKYMVGVSAISAIYALLSTISLWVTCLVSKAWLFFVPDQVLAYVMTTSVAGATEIVYLLNKGDKIVTWSEMCSSYPHYCSKLTIALGLHVFVLFFFLFLSVISAYRAFSPFDPPCDSQTNIDA.

The interval 1 to 24 (MRANNNNTREEERSSSSKQQQPQA) is disordered. The Cytoplasmic segment spans residues 1-29 (MRANNNNTREEERSSSSKQQQPQAHMSLK). Residues 30-50 (IIDSCLRLSVVPLSVATIWLT) traverse the membrane as a helical segment. Residues 51-73 (VTNHESNPDYGNLDYNSIMGLKY) lie on the Extracellular side of the membrane. The helical transmembrane segment at 74 to 94 (MVGVSAISAIYALLSTISLWV) threads the bilayer. At 95 to 109 (TCLVSKAWLFFVPDQ) the chain is on the cytoplasmic side. A helical membrane pass occupies residues 110 to 132 (VLAYVMTTSVAGATEIVYLLNKG). Residues 133–151 (DKIVTWSEMCSSYPHYCSK) lie on the Extracellular side of the membrane. A helical membrane pass occupies residues 152 to 172 (LTIALGLHVFVLFFFLFLSVI). Topologically, residues 173 to 193 (SAYRAFSPFDPPCDSQTNIDA) are cytoplasmic.

It belongs to the Casparian strip membrane proteins (CASP) family. In terms of assembly, homodimer and heterodimers.

Its subcellular location is the cell membrane. The chain is CASP-like protein 2D1 from Arabidopsis lyrata subsp. lyrata (Lyre-leaved rock-cress).